A 181-amino-acid polypeptide reads, in one-letter code: Negative modulator of initiation of replication (181 aa).

Interaction with DNA stretches follow at residues 87–88 (AV), 116–120 (RTRVY), and 150–156 (NTNTGRK).

This sequence belongs to the SeqA family. As to quaternary structure, homodimer. Polymerizes to form helical filaments.

Its subcellular location is the cytoplasm. Functionally, negative regulator of replication initiation, which contributes to regulation of DNA replication and ensures that replication initiation occurs exactly once per chromosome per cell cycle. Binds to pairs of hemimethylated GATC sequences in the oriC region, thus preventing assembly of replication proteins and re-initiation at newly replicated origins. Repression is relieved when the region becomes fully methylated. The sequence is that of Negative modulator of initiation of replication from Shigella dysenteriae serotype 1 (strain Sd197).